A 128-amino-acid polypeptide reads, in one-letter code: Putative lipid-binding protein At4g00165 (128 aa).

A signal peptide spans 1–23 (MGISKALRSLLILLLLNITFFFG). Disulfide bonds link cysteine 34–cysteine 90, cysteine 46–cysteine 76, cysteine 56–cysteine 75, and cysteine 92–cysteine 128.

It belongs to the plant LTP family. PEARLI1 subfamily.

It localises to the secreted. The sequence is that of Putative lipid-binding protein At4g00165 from Arabidopsis thaliana (Mouse-ear cress).